The chain runs to 472 residues: Protein c-ets-2-B (472 aa).

Positions 85–170 (DTFNGFAKER…EHLEEMMKEY (86 aa)) constitute a PNT domain. The ETS DNA-binding region spans 366-446 (IQLWQFLLEL…SGKRYVYRFV (81 aa)).

Belongs to the ETS family.

Its subcellular location is the nucleus. Its function is as follows. Probable transcription factor. The polypeptide is Protein c-ets-2-B (ets2-b) (Xenopus laevis (African clawed frog)).